A 483-amino-acid chain; its full sequence is tRNA sulfurtransferase (483 aa).

In terms of domain architecture, THUMP spans 61–165; that stretch reads PLVADALTLI…NDRLLLITER (105 aa). ATP contacts are provided by residues 183-184, Lys265, Gly287, and Gln296; that span reads LI. An intrachain disulfide couples Cys344 to Cys457. Positions 405 to 483 constitute a Rhodanese domain; sequence LGSGDVVLDI…GFQNVKVYRP (79 aa). Cys457 functions as the Cysteine persulfide intermediate in the catalytic mechanism.

It belongs to the ThiI family.

Its subcellular location is the cytoplasm. The enzyme catalyses [ThiI sulfur-carrier protein]-S-sulfanyl-L-cysteine + a uridine in tRNA + 2 reduced [2Fe-2S]-[ferredoxin] + ATP + H(+) = [ThiI sulfur-carrier protein]-L-cysteine + a 4-thiouridine in tRNA + 2 oxidized [2Fe-2S]-[ferredoxin] + AMP + diphosphate. It catalyses the reaction [ThiS sulfur-carrier protein]-C-terminal Gly-Gly-AMP + S-sulfanyl-L-cysteinyl-[cysteine desulfurase] + AH2 = [ThiS sulfur-carrier protein]-C-terminal-Gly-aminoethanethioate + L-cysteinyl-[cysteine desulfurase] + A + AMP + 2 H(+). Its pathway is cofactor biosynthesis; thiamine diphosphate biosynthesis. Its function is as follows. Catalyzes the ATP-dependent transfer of a sulfur to tRNA to produce 4-thiouridine in position 8 of tRNAs, which functions as a near-UV photosensor. Also catalyzes the transfer of sulfur to the sulfur carrier protein ThiS, forming ThiS-thiocarboxylate. This is a step in the synthesis of thiazole, in the thiamine biosynthesis pathway. The sulfur is donated as persulfide by IscS. The polypeptide is tRNA sulfurtransferase (Sodalis glossinidius (strain morsitans)).